The following is a 272-amino-acid chain: MATELRATEHGRQKISEKFDELKQKKEGALIGYVMAGDPSAEATFGIVKALVNGGADIIELGFPFSDPVADGPTIQAAGQRALAAGMDIEHYFELVRGLGVEVPLVCMTYYNPVFRYGVDKFVEHAADAGISGLIIPDIPVEEAADLKSSCEKYGLDLIFLVAPTTTDARIRKILERGSGFIYLVSRLGVTGARADVSGSTKELLSRVKTDIPKAVGFGISTGKQAAEVRKAGADAVIVGSVFVRIIEEGNGVNEKLEALARELKSGILGAN.

Active-site proton acceptor residues include Glu60 and Asp71.

It belongs to the TrpA family. In terms of assembly, tetramer of two alpha and two beta chains.

The enzyme catalyses (1S,2R)-1-C-(indol-3-yl)glycerol 3-phosphate + L-serine = D-glyceraldehyde 3-phosphate + L-tryptophan + H2O. Its pathway is amino-acid biosynthesis; L-tryptophan biosynthesis; L-tryptophan from chorismate: step 5/5. The alpha subunit is responsible for the aldol cleavage of indoleglycerol phosphate to indole and glyceraldehyde 3-phosphate. The polypeptide is Tryptophan synthase alpha chain (Methanosarcina acetivorans (strain ATCC 35395 / DSM 2834 / JCM 12185 / C2A)).